The primary structure comprises 475 residues: Ribulose bisphosphate carboxylase large chain (475 aa).

A propeptide spanning residues Met-1–Ser-2 is cleaved from the precursor. Position 3 is an N-acetylproline (Pro-3). Lys-14 carries the N6,N6,N6-trimethyllysine modification. Residues Asn-123 and Thr-173 each contribute to the substrate site. The Proton acceptor role is filled by Lys-175. Residue Lys-177 participates in substrate binding. Residues Lys-201, Asp-203, and Glu-204 each contribute to the Mg(2+) site. Position 201 is an N6-carboxylysine (Lys-201). His-294 serves as the catalytic Proton acceptor. Residues Arg-295, His-327, and Ser-379 each coordinate substrate.

This sequence belongs to the RuBisCO large chain family. Type I subfamily. In terms of assembly, heterohexadecamer of 8 large chains and 8 small chains; disulfide-linked. The disulfide link is formed within the large subunit homodimers. Requires Mg(2+) as cofactor. Post-translationally, the disulfide bond which can form in the large chain dimeric partners within the hexadecamer appears to be associated with oxidative stress and protein turnover.

It is found in the plastid. The protein resides in the chloroplast. The enzyme catalyses 2 (2R)-3-phosphoglycerate + 2 H(+) = D-ribulose 1,5-bisphosphate + CO2 + H2O. It catalyses the reaction D-ribulose 1,5-bisphosphate + O2 = 2-phosphoglycolate + (2R)-3-phosphoglycerate + 2 H(+). Its function is as follows. RuBisCO catalyzes two reactions: the carboxylation of D-ribulose 1,5-bisphosphate, the primary event in carbon dioxide fixation, as well as the oxidative fragmentation of the pentose substrate in the photorespiration process. Both reactions occur simultaneously and in competition at the same active site. This is Ribulose bisphosphate carboxylase large chain from Afrocarpus gracilior (African fern pine).